A 96-amino-acid chain; its full sequence is Alpha-elapitoxin-Al2b (96 aa).

The signal sequence occupies residues 1 to 21; that stretch reads MKTLLLTLVVVTIVCLDFGGG. Cystine bridges form between cysteine 24–cysteine 41, cysteine 34–cysteine 62, cysteine 47–cysteine 51, cysteine 66–cysteine 77, and cysteine 78–cysteine 83.

The protein belongs to the three-finger toxin family. Long-chain subfamily. Type II alpha-neurotoxin sub-subfamily. In terms of tissue distribution, expressed by the venom gland.

The protein resides in the secreted. Functionally, potent long-chain postsynaptic neurotoxin. Pseudo-irreversibly inhibits the nicotinic acetylcholine receptor through competitive antagonism. In Austrelaps labialis (Pygmy copperhead), this protein is Alpha-elapitoxin-Al2b.